The following is an 810-amino-acid chain: Phospholipase D alpha 2 (810 aa).

Residues 1–126 (MEECLLHGRL…LHGEEVDRWV (126 aa)) enclose the C2 domain. Position 187 (Asp-187) interacts with Ca(2+). Residues 327–365 (TMFTHHQKIVVVDSEMPSGGSRSRRIVSFVGGLDLCDGR) enclose the PLD phosphodiesterase 1 domain. Active-site residues include His-332, Lys-334, and Asp-339. An a 1,2-diacyl-sn-glycero-3-phosphate-binding site is contributed by His-332. His-371 and His-405 together coordinate Ca(2+). Residues Gln-521 and His-661 each coordinate a 1,2-diacyl-sn-glycero-3-phosphate. The 28-residue stretch at 656-683 (FMIYVHTKMMIVDDEYIIIGSANINQRS) folds into the PLD phosphodiesterase 2 domain. Residues His-661, Lys-663, and Asp-668 contribute to the active site. Ca(2+) is bound at residue Glu-722.

It belongs to the phospholipase D family. C2-PLD subfamily. It depends on Ca(2+) as a cofactor. In terms of tissue distribution, highly expressed in roots, stems and flowers, moderately in leaves, seedlings and siliques. Not detected in dry seeds.

Its subcellular location is the cytoplasm. The protein localises to the membrane. It localises to the vacuole. The protein resides in the cytoplasmic vesicle. It is found in the clathrin-coated vesicle. It carries out the reaction a 1,2-diacyl-sn-glycero-3-phosphocholine + H2O = a 1,2-diacyl-sn-glycero-3-phosphate + choline + H(+). Its function is as follows. Hydrolyzes glycerol-phospholipids at the terminal phosphodiesteric bond to generate phosphatidic acids (PA). Plays an important role in various cellular processes, including phytohormone action and response to stress, characterized by acidification of the cell. This Arabidopsis thaliana (Mouse-ear cress) protein is Phospholipase D alpha 2.